The primary structure comprises 289 residues: Pantothenate synthetase (289 aa).

30-37 (MGYLHEGH) contributes to the ATP binding site. Catalysis depends on H37, which acts as the Proton donor. Q61 contacts (R)-pantoate. Beta-alanine is bound at residue Q61. 147–150 (GLKD) is an ATP binding site. Q153 contacts (R)-pantoate. Residues V176 and 184–187 (KSSR) each bind ATP.

Belongs to the pantothenate synthetase family. As to quaternary structure, homodimer.

Its subcellular location is the cytoplasm. The enzyme catalyses (R)-pantoate + beta-alanine + ATP = (R)-pantothenate + AMP + diphosphate + H(+). It functions in the pathway cofactor biosynthesis; (R)-pantothenate biosynthesis; (R)-pantothenate from (R)-pantoate and beta-alanine: step 1/1. In terms of biological role, catalyzes the condensation of pantoate with beta-alanine in an ATP-dependent reaction via a pantoyl-adenylate intermediate. This chain is Pantothenate synthetase, found in Geobacillus thermodenitrificans (strain NG80-2).